Reading from the N-terminus, the 132-residue chain is Ribosome-binding factor A (132 aa).

This sequence belongs to the RbfA family. Monomer. Binds 30S ribosomal subunits, but not 50S ribosomal subunits or 70S ribosomes.

It localises to the cytoplasm. Its function is as follows. One of several proteins that assist in the late maturation steps of the functional core of the 30S ribosomal subunit. Associates with free 30S ribosomal subunits (but not with 30S subunits that are part of 70S ribosomes or polysomes). Required for efficient processing of 16S rRNA. May interact with the 5'-terminal helix region of 16S rRNA. In Burkholderia cenocepacia (strain ATCC BAA-245 / DSM 16553 / LMG 16656 / NCTC 13227 / J2315 / CF5610) (Burkholderia cepacia (strain J2315)), this protein is Ribosome-binding factor A.